The primary structure comprises 73 residues: Gas vesicle protein M2 (73 aa).

Belongs to the gas vesicle GvpA family. As to quaternary structure, gvpF to GvpM interact with each other in vitro, and may form multi-subunit complex(es). Might interact with GvpA.

It localises to the gas vesicle. Proteins GvpF to GvpM might be involved in nucleating gas vesicle formation. A minor component of the gas vesicle. Gas vesicles are hollow, gas filled proteinaceous nanostructures found in several microbial planktonic microorganisms. They allow positioning of halobacteria at the optimal depth for growth in the poorly aerated, shallow brine pools of their habitat. Functionally, expression of 2 c-vac DNA fragments containing 2 divergently transcribed regions (gvpE-gvpF-gvpG-gvpH-gvpI-gvpJ-gvpK-gvpL-gvpM and gvpA-gvpC-gvpN-gvpO) allows H.volcanii to produce gas vesicles. The sequence is that of Gas vesicle protein M2 from Halobacterium salinarum (strain ATCC 700922 / JCM 11081 / NRC-1) (Halobacterium halobium).